The sequence spans 1157 residues: DNA-directed RNA polymerase subunit beta (1157 aa).

It belongs to the RNA polymerase beta chain family. In terms of assembly, the RNAP catalytic core consists of 2 alpha, 1 beta, 1 beta' and 1 omega subunit. When a sigma factor is associated with the core the holoenzyme is formed, which can initiate transcription.

It catalyses the reaction RNA(n) + a ribonucleoside 5'-triphosphate = RNA(n+1) + diphosphate. DNA-dependent RNA polymerase catalyzes the transcription of DNA into RNA using the four ribonucleoside triphosphates as substrates. The sequence is that of DNA-directed RNA polymerase subunit beta from Tropheryma whipplei (strain Twist) (Whipple's bacillus).